Reading from the N-terminus, the 520-residue chain is Fumarate hydratase, mitochondrial (520 aa).

The N-terminal 39 residues, 1-39 (MASVAHISTAKAIFRAGGLPCRRLITPTLTGLPLKTHRM), are a transit peptide targeting the mitochondrion. Substrate-binding positions include 153–155 (SGT), 184–187 (HPND), 194–196 (SSN), and threonine 242. Histidine 243 acts as the Proton donor/acceptor in catalysis. Serine 373 is an active-site residue. Substrate is bound by residues serine 374 and 379-381 (KVN).

Belongs to the class-II fumarase/aspartase family. Fumarase subfamily. Homotetramer.

It is found in the mitochondrion matrix. The protein localises to the cytoplasm. The protein resides in the nucleus. The catalysed reaction is (S)-malate = fumarate + H2O. The protein operates within carbohydrate metabolism; tricarboxylic acid cycle; (S)-malate from fumarate: step 1/1. Catalyzes the reversible stereospecific interconversion of fumarate to L-malate. In mitochondrion, catalyzes the hydration of fumarate to L-malate in the tricarboxylic acid (TCA) cycle to facilitate a transition step in the production of energy in the form of NADH. In cytoplasm and nucleus, involved in DNA repair in response to DNA damage: following DNA double-strand breaks (DSBs), translocates from the cytosol to the nucleus and promotes DNA repair by catalyzing the dehydration of L-malate to fumarate. The chain is Fumarate hydratase, mitochondrial (fum1) from Schizosaccharomyces pombe (strain 972 / ATCC 24843) (Fission yeast).